The chain runs to 759 residues: Phosphoribosylformylglycinamidine synthase subunit PurL (759 aa).

The active site involves H46. ATP contacts are provided by Y49 and K88. E90 contributes to the Mg(2+) binding site. Residues 91 to 94 (SHNH) and R113 each bind substrate. The active-site Proton acceptor is the H92. Mg(2+) is bound at residue D114. Substrate is bound at residue Q237. D265 is a binding site for Mg(2+). A substrate-binding site is contributed by 309–311 (ESQ). D498 and G535 together coordinate ATP. A Mg(2+)-binding site is contributed by N536. Substrate is bound at residue S538.

It belongs to the FGAMS family. In terms of assembly, monomer. Part of the FGAM synthase complex composed of 1 PurL, 1 PurQ and 2 PurS subunits.

The protein resides in the cytoplasm. It catalyses the reaction N(2)-formyl-N(1)-(5-phospho-beta-D-ribosyl)glycinamide + L-glutamine + ATP + H2O = 2-formamido-N(1)-(5-O-phospho-beta-D-ribosyl)acetamidine + L-glutamate + ADP + phosphate + H(+). It functions in the pathway purine metabolism; IMP biosynthesis via de novo pathway; 5-amino-1-(5-phospho-D-ribosyl)imidazole from N(2)-formyl-N(1)-(5-phospho-D-ribosyl)glycinamide: step 1/2. Its function is as follows. Part of the phosphoribosylformylglycinamidine synthase complex involved in the purines biosynthetic pathway. Catalyzes the ATP-dependent conversion of formylglycinamide ribonucleotide (FGAR) and glutamine to yield formylglycinamidine ribonucleotide (FGAM) and glutamate. The FGAM synthase complex is composed of three subunits. PurQ produces an ammonia molecule by converting glutamine to glutamate. PurL transfers the ammonia molecule to FGAR to form FGAM in an ATP-dependent manner. PurS interacts with PurQ and PurL and is thought to assist in the transfer of the ammonia molecule from PurQ to PurL. The polypeptide is Phosphoribosylformylglycinamidine synthase subunit PurL (Anaeromyxobacter sp. (strain K)).